The sequence spans 519 residues: Protein nucleotidyltransferase YdiU (519 aa).

ATP-binding residues include Gly-100, Gly-102, Arg-103, Lys-123, Asp-135, Gly-136, Arg-193, and Arg-200. Asp-270 functions as the Proton acceptor in the catalytic mechanism. Residues Asn-271 and Asp-280 each contribute to the Mg(2+) site. An ATP-binding site is contributed by Asp-280.

The protein belongs to the SELO family. Mg(2+) is required as a cofactor. Requires Mn(2+) as cofactor.

It catalyses the reaction L-seryl-[protein] + ATP = 3-O-(5'-adenylyl)-L-seryl-[protein] + diphosphate. It carries out the reaction L-threonyl-[protein] + ATP = 3-O-(5'-adenylyl)-L-threonyl-[protein] + diphosphate. The catalysed reaction is L-tyrosyl-[protein] + ATP = O-(5'-adenylyl)-L-tyrosyl-[protein] + diphosphate. The enzyme catalyses L-histidyl-[protein] + UTP = N(tele)-(5'-uridylyl)-L-histidyl-[protein] + diphosphate. It catalyses the reaction L-seryl-[protein] + UTP = O-(5'-uridylyl)-L-seryl-[protein] + diphosphate. It carries out the reaction L-tyrosyl-[protein] + UTP = O-(5'-uridylyl)-L-tyrosyl-[protein] + diphosphate. Its function is as follows. Nucleotidyltransferase involved in the post-translational modification of proteins. It can catalyze the addition of adenosine monophosphate (AMP) or uridine monophosphate (UMP) to a protein, resulting in modifications known as AMPylation and UMPylation. This chain is Protein nucleotidyltransferase YdiU, found in Xylella fastidiosa (strain Temecula1 / ATCC 700964).